The primary structure comprises 172 residues: Large ribosomal subunit protein uL10 (172 aa).

This sequence belongs to the universal ribosomal protein uL10 family. In terms of assembly, part of the ribosomal stalk of the 50S ribosomal subunit. The N-terminus interacts with L11 and the large rRNA to form the base of the stalk. The C-terminus forms an elongated spine to which L12 dimers bind in a sequential fashion forming a multimeric L10(L12)X complex.

Its function is as follows. Forms part of the ribosomal stalk, playing a central role in the interaction of the ribosome with GTP-bound translation factors. The sequence is that of Large ribosomal subunit protein uL10 from Ruegeria pomeroyi (strain ATCC 700808 / DSM 15171 / DSS-3) (Silicibacter pomeroyi).